The sequence spans 461 residues: MAQQSIIDTVVNLCKRRGLVYPCGEIYGGTRSAWDYGPLGVELKENIKRQWWRTMVTSRPDVVGVDTSVILPRQVWVTSGHVEVFTDPLVESLHTHKRYRADHLLEAYEEKHGHPPANGLADINDPETGQPGKWTEPKAFSGLLKTFLGPVDDEEGLHYLRPETAQGIFVNFKNVMNSSRMKPPFGIANIGKSFRNEITPGNFIFRTREFEQMEMEFFVKPGEDEEWHQHWIDARHQWYIDLGVNPDNLRLYEHPQEKLSHYSKRTVDIEYAFNFANSKWGELEGIANRTDYDLRVHSEGSGEDLSYFDQETGERWIPYVIEPAAGLGRAMMVFLMDAYHEDEAPNSKGGVDKRVVLKLDRRLAPVKVAVLPLSKKPELSGPAEKLAAELRQFWNVEYDTSGAIGRRYRRQDEIGTPFCVTVDFDTLEDNAVTVRERDTMEQIRVPLDELQGYLAQQLIGC.

Substrate-binding residues include Arg-100 and Glu-163. ATP is bound by residues 195–197, 205–210, 282–283, and 326–329; these read RNE, FRTREF, EL, and GLGR. 210–214 lines the substrate pocket; that stretch reads FEQME. A substrate-binding site is contributed by 322-326; sequence EPAAG.

This sequence belongs to the class-II aminoacyl-tRNA synthetase family. As to quaternary structure, homodimer.

It localises to the cytoplasm. It catalyses the reaction tRNA(Gly) + glycine + ATP = glycyl-tRNA(Gly) + AMP + diphosphate. Functionally, catalyzes the attachment of glycine to tRNA(Gly). This chain is Glycine--tRNA ligase, found in Corynebacterium efficiens (strain DSM 44549 / YS-314 / AJ 12310 / JCM 11189 / NBRC 100395).